A 568-amino-acid polypeptide reads, in one-letter code: Oxygen-dependent choline dehydrogenase (568 aa).

8-37 (DYIIIGAGSAGNTLAARLTEDAGVTVLLLE) is a binding site for FAD. Catalysis depends on His477, which acts as the Proton acceptor.

This sequence belongs to the GMC oxidoreductase family. It depends on FAD as a cofactor.

It catalyses the reaction choline + A = betaine aldehyde + AH2. The catalysed reaction is betaine aldehyde + NAD(+) + H2O = glycine betaine + NADH + 2 H(+). The protein operates within amine and polyamine biosynthesis; betaine biosynthesis via choline pathway; betaine aldehyde from choline (cytochrome c reductase route): step 1/1. Its function is as follows. Involved in the biosynthesis of the osmoprotectant glycine betaine. Catalyzes the oxidation of choline to betaine aldehyde and betaine aldehyde to glycine betaine at the same rate. The polypeptide is Oxygen-dependent choline dehydrogenase (Pseudomonas savastanoi pv. phaseolicola (strain 1448A / Race 6) (Pseudomonas syringae pv. phaseolicola (strain 1448A / Race 6))).